We begin with the raw amino-acid sequence, 548 residues long: 5-epi-aristolochene synthase (548 aa).

Positions 264, 301, 305, 441, and 444 each coordinate (2E,6E)-farnesyl diphosphate. The Mg(2+) site is built by Asp301 and Asp305. The short motif at 301 to 305 (DDTFD) is the DDXXD motif element. The Mg(2+) site is built by Asp444, Asp445, Thr448, and Glu452.

It belongs to the terpene synthase family. As to quaternary structure, monomer. The cofactor is Mg(2+). Self-alkylated at Tyr-520 in the presence of (2Z,6E)-farnesyl diphosphate ((Z,E)-FPP). Self-alkylated at Asp-444 at warm temperature (42 degrees Celsius) in the presence of (2E,6E)-farnesyl diphosphate ((E,E)-FPP).

Its subcellular location is the cytoplasm. The catalysed reaction is (2E,6E)-farnesyl diphosphate = (+)-5-epi-aristolochene + diphosphate. The enzyme catalyses (2Z,6E)-farnesyl diphosphate = (+)-2-epi-prezizaene + diphosphate. It catalyses the reaction (2Z,6E)-farnesyl diphosphate = (-)-alpha-cedrene + diphosphate. It carries out the reaction (2Z,6E)-farnesyl diphosphate = (-)-beta-curcumene + diphosphate. It functions in the pathway secondary metabolite biosynthesis; terpenoid biosynthesis. With respect to regulation, inhibited activity toward farnesyl diphosphate (FPP) by anilinogeranyl diphosphate (AGPP); AGPP undergoes a cyclization event leading to the formation of a novel macrocyclic paracyclophane alkaloid. Repressed by sesquilavandulyl diphosphate (SPP) via the induction of self-alkyation. Catalyzes the cyclization of trans,trans-farnesyl diphosphate (FPP) to the bicyclic intermediate 5-epi-aristolochene, initial step in the conversion of FPP to the sesquiterpenoid antifungal phytoalexin capsidiol. Produces germacrene A as an enzyme-bound intermediate that is not released by the enzyme, but is further cyclized to produce the bicyclic 5-epi-aristolochene. Mediates, at low levels, the formation of 4-epi-eremophilene and premnaspirodiene from trans,trans-farnesyl diphosphate. Also mediates the conversion of cis,trans-farnesyl diphosphate to cisoid minor products such as (+)-2-epi-prezizaene, (-)-alpha-cedrene and, to a lesser extent, (-)-beta-curcumene; also produces, at low levels, alpha-acoradiene and 4-epi-alpha-acoradiene, but barely nerolidol, alpha-bisabolol, epi-alpha-bisabolol and cis-farnesol. This chain is 5-epi-aristolochene synthase (EAS3), found in Nicotiana tabacum (Common tobacco).